Reading from the N-terminus, the 545-residue chain is Ribulokinase (545 aa).

Belongs to the ribulokinase family.

It carries out the reaction D-ribulose + ATP = D-ribulose 5-phosphate + ADP + H(+). It catalyses the reaction L-ribulose + ATP = L-ribulose 5-phosphate + ADP + H(+). The protein operates within carbohydrate degradation; L-arabinose degradation via L-ribulose; D-xylulose 5-phosphate from L-arabinose (bacterial route): step 2/3. The protein is Ribulokinase of Staphylococcus aureus (strain MSSA476).